The primary structure comprises 125 residues: Methylglyoxal synthase (125 aa).

One can recognise an MGS-like domain in the interval Met1–Asp125. Residues His12, Lys16, Thr38 to Thr41, and Ser59 to Gly60 each bind substrate. Asp65 functions as the Proton donor/acceptor in the catalytic mechanism. His92 contributes to the substrate binding site.

The protein belongs to the methylglyoxal synthase family.

The enzyme catalyses dihydroxyacetone phosphate = methylglyoxal + phosphate. Catalyzes the formation of methylglyoxal from dihydroxyacetone phosphate. In Brucella abortus (strain S19), this protein is Methylglyoxal synthase.